Consider the following 328-residue polypeptide: Malate dehydrogenase (328 aa).

Position 12-18 (glycine 12–alanine 18) interacts with NAD(+). The substrate site is built by arginine 93 and arginine 99. NAD(+) is bound by residues asparagine 106, glutamine 113, and valine 130–asparagine 132. 2 residues coordinate substrate: asparagine 132 and arginine 163. Histidine 188 (proton acceptor) is an active-site residue.

It belongs to the LDH/MDH superfamily. MDH type 2 family.

The enzyme catalyses (S)-malate + NAD(+) = oxaloacetate + NADH + H(+). Catalyzes the reversible oxidation of malate to oxaloacetate. The chain is Malate dehydrogenase from Burkholderia lata (strain ATCC 17760 / DSM 23089 / LMG 22485 / NCIMB 9086 / R18194 / 383).